The sequence spans 304 residues: Nod factor export ATP-binding protein I (304 aa).

Residues 6–236 form the ABC transporter domain; that stretch reads IDFQQVEKRY…EIGCDVIEIY (231 aa). Residue 38 to 45 participates in ATP binding; that stretch reads GPNGAGKT.

This sequence belongs to the ABC transporter superfamily. Lipooligosaccharide exporter (TC 3.A.1.102) family. As to quaternary structure, the complex is composed of two ATP-binding proteins (NodI) and two transmembrane proteins (NodJ).

Its subcellular location is the cell inner membrane. Its function is as follows. Part of the ABC transporter complex NodIJ involved in the export of the nodulation factors (Nod factors), the bacterial signal molecules that induce symbiosis and subsequent nodulation induction. Nod factors are LCO (lipo-chitin oligosaccharide), a modified beta-1,4-linked N-acetylglucosamine oligosaccharide. This subunit is responsible for energy coupling to the transport system. The protein is Nod factor export ATP-binding protein I of Burkholderia thailandensis (strain ATCC 700388 / DSM 13276 / CCUG 48851 / CIP 106301 / E264).